Consider the following 377-residue polypeptide: 3-dehydroquinate synthase (377 aa).

NAD(+) is bound by residues 115–119 (GVIGD), 139–140 (TS), lysine 152, and lysine 161. Zn(2+) is bound by residues glutamate 194, histidine 256, and histidine 275.

This sequence belongs to the sugar phosphate cyclases superfamily. Dehydroquinate synthase family. The cofactor is Co(2+). Zn(2+) serves as cofactor. NAD(+) is required as a cofactor.

The protein localises to the cytoplasm. The catalysed reaction is 7-phospho-2-dehydro-3-deoxy-D-arabino-heptonate = 3-dehydroquinate + phosphate. It functions in the pathway metabolic intermediate biosynthesis; chorismate biosynthesis; chorismate from D-erythrose 4-phosphate and phosphoenolpyruvate: step 2/7. Catalyzes the conversion of 3-deoxy-D-arabino-heptulosonate 7-phosphate (DAHP) to dehydroquinate (DHQ). This is 3-dehydroquinate synthase from Rhizobium rhizogenes (strain K84 / ATCC BAA-868) (Agrobacterium radiobacter).